Here is a 126-residue protein sequence, read N- to C-terminus: Alpha-lactalbumin (126 aa).

The C-type lysozyme domain occupies 1 to 126 (RIFQICELSR…CNSDLDQWKC (126 aa)). 4 disulfides stabilise this stretch: C6–C126, C30–C117, C63–C82, and C78–C96. The N-linked (GlcNAc...) asparagine glycan is linked to N47. Ca(2+) contacts are provided by K84, D87, D89, D92, and D93.

This sequence belongs to the glycosyl hydrolase 22 family. As to quaternary structure, lactose synthase (LS) is a heterodimer of a catalytic component, beta1,4-galactosyltransferase (beta4Gal-T1) and a regulatory component, alpha-lactalbumin (LA). Mammary gland specific. Secreted in milk.

The protein resides in the secreted. Functionally, regulatory subunit of lactose synthase, changes the substrate specificity of galactosyltransferase in the mammary gland making glucose a good acceptor substrate for this enzyme. This enables LS to synthesize lactose, the major carbohydrate component of milk. In other tissues, galactosyltransferase transfers galactose onto the N-acetylglucosamine of the oligosaccharide chains in glycoproteins. In Ornithorhynchus anatinus (Duckbill platypus), this protein is Alpha-lactalbumin (LALBA).